The primary structure comprises 147 residues: D-aminoacyl-tRNA deacylase (147 aa).

Positions 136-137 (GP) match the Gly-cisPro motif, important for rejection of L-amino acids motif.

This sequence belongs to the DTD family. As to quaternary structure, homodimer.

It is found in the cytoplasm. It carries out the reaction glycyl-tRNA(Ala) + H2O = tRNA(Ala) + glycine + H(+). The catalysed reaction is a D-aminoacyl-tRNA + H2O = a tRNA + a D-alpha-amino acid + H(+). Functionally, an aminoacyl-tRNA editing enzyme that deacylates mischarged D-aminoacyl-tRNAs. Also deacylates mischarged glycyl-tRNA(Ala), protecting cells against glycine mischarging by AlaRS. Acts via tRNA-based rather than protein-based catalysis; rejects L-amino acids rather than detecting D-amino acids in the active site. By recycling D-aminoacyl-tRNA to D-amino acids and free tRNA molecules, this enzyme counteracts the toxicity associated with the formation of D-aminoacyl-tRNA entities in vivo and helps enforce protein L-homochirality. The chain is D-aminoacyl-tRNA deacylase from Sulfurihydrogenibium sp. (strain YO3AOP1).